The primary structure comprises 703 residues: Protein teflon (703 aa).

Residues 32–55 (MFCHFCKDIFTHLPEFMRHLQWSH) form a C2H2-type 1 zinc finger. Disordered stretches follow at residues 78 to 111 (TSED…PGSS), 138 to 161 (SHEQ…ARKP), and 339 to 434 (SQQP…SKLE). Composition is skewed to polar residues over residues 84 to 94 (QSQANSCSSGD) and 138 to 147 (SHEQSYSKTP). A compositionally biased stretch (basic and acidic residues) spans 148–161 (PDSRTEGFRCARKP). Polar residues-rich tracts occupy residues 339-352 (SQQP…NNAV) and 364-373 (SLTVISSSPI). 2 C2H2-type zinc fingers span residues 649-672 (YFCE…QSVH) and 677-700 (FTCS…KTVH).

The protein belongs to the Teflon family.

The protein localises to the nucleus. Its subcellular location is the chromosome. Functionally, specifically required in males for proper segregation of autosomal bivalents at meiosis I. Expression is required in the male germ line prior to spermatocyte stage S4. May have a role as a bridging molecule maintaining adhesion to hold autosome bivalents together via heterochromatic connections. The polypeptide is Protein teflon (Drosophila pseudoobscura pseudoobscura (Fruit fly)).